A 76-amino-acid chain; its full sequence is Large ribosomal subunit protein eL20 (76 aa).

This sequence belongs to the eukaryotic ribosomal protein eL20 family. Part of the 50S ribosomal subunit. Binds 23S rRNA.

This Methanococcus maripaludis (strain C7 / ATCC BAA-1331) protein is Large ribosomal subunit protein eL20.